The chain runs to 2545 residues: Methylphloroacetophenone synthase (2545 aa).

Residues 8–261 (AFGALAPWPA…HVAIHEGIPQ (254 aa)) are N-terminal acylcarrier protein transacylase (SAT) domain. A Ketosynthase family 3 (KS3) domain is found at 383-798 (KDAIAIIGMG…GSNAAMIVLE (416 aa)). Catalysis depends on for beta-ketoacyl synthase activity residues C547, H682, and H721. The malonyl-CoA:ACP transacylase (MAT) domain stretch occupies residues 914–1218 (LCFGGQVSDR…VSLQLNKPNS (305 aa)). The active-site For acyl/malonyl transferase activity is the S1001. Residues 1293 to 1423 (LPAVLIRLKS…GTVNLKVADD (131 aa)) form an N-terminal hotdog fold region. Positions 1293–1605 (LPAVLIRLKS…FTDIRRPVPI (313 aa)) constitute a PKS/mFAS DH domain. Residues 1296–1604 (VLIRLKSFDS…NFTDIRRPVP (309 aa)) are product template (PT) domain. The C-terminal hotdog fold stretch occupies residues 1449 to 1605 (RSESLRGNVL…FTDIRRPVPI (157 aa)). Positions 1657–1731 (TSIYEDICGL…SLVDYLHGKG (75 aa)) constitute a Carrier domain. At S1691 the chain carries O-(pantetheine 4'-phosphoryl)serine. A compositionally biased stretch (low complexity) spans 1748–1768 (SSSHAISTGASSPPDSSGASA). The disordered stretch occupies residues 1748-1773 (SSSHAISTGASSPPDSSGASAMTTPP). The tract at residues 1931-2163 (FGASETKLLN…GFKHVSWTDG (233 aa)) is methyltransferase (CMeT) domain. The interval 2198–2544 (AGVPMEEVVW…YDFICRQLGM (347 aa)) is claisen cyclase (CLC) domain. Active-site for thioesterase activity residues include S2321, D2481, and H2513.

In terms of biological role, methylphloroacetophenone synthase; part of the gene cluster that mediates the biosynthesis of usnic acid, a dibenzofuran lichen product possessing a broad spectrum of biological activities. Two genes, mpas and mpao, comprise the usnic acid biosynthetic gene cluster with a single post-PKS enzyme, the methylphloracetophenone oxidase (mpao). The methylphloroacetophenone synthase (mpas) is a non-reducing polyketide synthase that produces methylphloracetophenone from acetate via a methylated tetraketide intermediate. The methylphloroacetophenone oxidase then carries out the oxidative dimerization of methylphloracetophenone to usnic acid. This chain is Methylphloroacetophenone synthase, found in Cladonia uncialis (Cup lichen).